The primary structure comprises 887 residues: Degenerin-like protein unc-105 (887 aa).

The segment at 1-33 is disordered; the sequence is MAEDRIKSKLRRPASIESTMSSRTKPRHKPSPM. The Cytoplasmic portion of the chain corresponds to 1–93; it reads MAEDRIKSKL…AATADGKWRW (93 aa). Residues 94–114 form a helical membrane-spanning segment; the sequence is FWYTAFTICLLALLIQIFFLI. The Extracellular segment spans residues 115–698; sequence SKYRQYGKTV…SVLADLGGLT (584 aa). 5 N-linked (GlcNAc...) asparagine glycosylation sites follow: asparagine 244, asparagine 450, asparagine 473, asparagine 581, and asparagine 599. A helical membrane pass occupies residues 699 to 719; the sequence is GLWIGASVVSLLEIVTLIVFA. The Cytoplasmic segment spans residues 720–887; sequence TQAYVRKRKG…YSAPYEHRKK (168 aa). Disordered regions lie at residues 794 to 815 and 859 to 887; these read AIQE…NGSC and SNSE…HRKK.

The protein belongs to the amiloride-sensitive sodium channel (TC 1.A.6) family. Expressed in body wall muscle.

The protein resides in the membrane. In terms of biological role, ion channel which is permeable to small monovalent cations. Shown not to be H+-ion gated. May be mechanosensitive and is required for growth and muscle development. This Caenorhabditis elegans protein is Degenerin-like protein unc-105 (unc-105).